Here is a 503-residue protein sequence, read N- to C-terminus: ATP synthase subunit alpha (503 aa).

ATP is bound at residue 170–177 (GDKQTGKT).

It belongs to the ATPase alpha/beta chains family. In terms of assembly, F-type ATPases have 2 components, CF(1) - the catalytic core - and CF(0) - the membrane proton channel. CF(1) has five subunits: alpha(3), beta(3), gamma(1), delta(1), epsilon(1). CF(0) has three main subunits: a(1), b(2) and c(9-12). The alpha and beta chains form an alternating ring which encloses part of the gamma chain. CF(1) is attached to CF(0) by a central stalk formed by the gamma and epsilon chains, while a peripheral stalk is formed by the delta and b chains.

The protein localises to the cell inner membrane. It carries out the reaction ATP + H2O + 4 H(+)(in) = ADP + phosphate + 5 H(+)(out). In terms of biological role, produces ATP from ADP in the presence of a proton gradient across the membrane. The alpha chain is a regulatory subunit. The chain is ATP synthase subunit alpha from Helicobacter pylori (strain Shi470).